The primary structure comprises 763 residues: Phosphoglycerol transferase I (763 aa).

A run of 4 helical transmembrane segments spans residues 4-19 (LLSF…IYAW), 26-48 (WWFA…LFAS), 76-98 (YILP…GWIL), and 105-127 (PHHF…ASPA).

This sequence belongs to the OpgB family.

Its subcellular location is the cell inner membrane. The catalysed reaction is a phosphatidylglycerol + a membrane-derived-oligosaccharide D-glucose = a 1,2-diacyl-sn-glycerol + a membrane-derived-oligosaccharide 6-(glycerophospho)-D-glucose.. The protein operates within glycan metabolism; osmoregulated periplasmic glucan (OPG) biosynthesis. Functionally, transfers a phosphoglycerol residue from phosphatidylglycerol to the membrane-bound nascent glucan backbones. The sequence is that of Phosphoglycerol transferase I from Shigella flexneri.